The chain runs to 391 residues: GDSL esterase/lipase 22 (391 aa).

The signal sequence occupies residues 1 to 29 (MMANNCNLVSVLCVILVLTLFHNPITVAG). The Nucleophile role is filled by S43. N105, N165, and N288 each carry an N-linked (GlcNAc...) asparagine glycan. Catalysis depends on residues D322 and H325. A disordered region spans residues 372-391 (PATVHASDSSSSTSRGYEYY).

It belongs to the 'GDSL' lipolytic enzyme family. In terms of assembly, component of the PYK10 complex, at least composed of PYK10/BGLU23, BGLU21, BGLU22, JAL22, JAL23, PBP1/JAL30, PBP2/JAL31, JAL32, JAL33, JAL34, JAL35, GLL22 and GLL23.

It is found in the secreted. The polypeptide is GDSL esterase/lipase 22 (GLL22) (Arabidopsis thaliana (Mouse-ear cress)).